A 528-amino-acid polypeptide reads, in one-letter code: Inositol-3-phosphate synthase (528 aa).

NAD(+)-binding residues include Gly-66, Gly-67, Asn-68, Asn-69, Asp-140, Gln-187, Arg-190, Thr-228, Ala-229, Asn-230, Thr-231, Gly-279, Asp-304, Ser-307, Asn-338, Asn-339, Asp-340, Lys-353, Gly-392, Asp-393, Asp-421, and Ser-422.

Belongs to the myo-inositol 1-phosphate synthase family. The cofactor is NAD(+).

Its subcellular location is the cytoplasm. It localises to the cytosol. The catalysed reaction is D-glucose 6-phosphate = 1D-myo-inositol 3-phosphate. The protein operates within polyol metabolism; myo-inositol biosynthesis; myo-inositol from D-glucose 6-phosphate: step 1/2. With respect to regulation, activated by ammonium ions. Key enzyme in myo-inositol biosynthesis pathway that catalyzes the conversion of glucose 6-phosphate to 1-myo-inositol 1-phosphate in a NAD-dependent manner. Rate-limiting enzyme in the synthesis of all inositol-containing compounds. De novo-synthesized myo-inositol is essential for incorporation into GPI (glycosylphosphatidylinositol) glycolipids in the bloodstream form. The chain is Inositol-3-phosphate synthase from Trypanosoma brucei brucei.